Here is a 426-residue protein sequence, read N- to C-terminus: Branched-chain amino acid permease BrnQ (426 aa).

12 helical membrane passes run 11-31, 41-61, 76-96, 111-131, 140-160, 186-206, 219-239, 268-288, 296-316, 324-344, 358-378, and 390-410; these read LMLF…MLGL, ILGF…AVVL, IFGL…YALP, NALY…ALSW, LGKW…VLSV, GYMT…ISAF, VVSA…LGSI, IMFV…LISA, LLPG…SFGV, VLAV…TLVF, TYLF…IPAL, and MSLG…AIDW.

It belongs to the branched chain amino acid transporter family.

Its subcellular location is the cell membrane. Branched chain amino acid transport system, which transports isoleucine. The sequence is that of Branched-chain amino acid permease BrnQ from Corynebacterium glutamicum (strain ATCC 13032 / DSM 20300 / JCM 1318 / BCRC 11384 / CCUG 27702 / LMG 3730 / NBRC 12168 / NCIMB 10025 / NRRL B-2784 / 534).